The following is a 535-amino-acid chain: Suppressor of cytokine signaling 6 (535 aa).

The segment covering 80–89 (RLSAKQKSKG) has biased composition (basic residues). Positions 80–105 (RLSAKQKSKGKAGTPSGSSADEDTFS) are disordered. Positions 384–491 (WYWGPITRWE…TYPVRLTNPV (108 aa)) constitute an SH2 domain. An SOCS box domain is found at 486-535 (RLTNPVSRFMQVRSLQYLCRFVIRQYTRIDLIQKLPLPNKMKDYLQEKHY).

In terms of assembly, interacts with RBCK1. Interacts with phosphorylated IRS4. Interacts with PIM3. Interacts with KIT (phosphorylated).

Its pathway is protein modification; protein ubiquitination. SOCS family proteins form part of a classical negative feedback system that regulates cytokine signal transduction. May be a substrate recognition component of a SCF-like ECS (Elongin BC-CUL2/5-SOCS-box protein) E3 ubiquitin-protein ligase complex which mediates the ubiquitination and subsequent proteasomal degradation of target proteins. Regulates KIT degradation by ubiquitination of the tyrosine-phosphorylated receptor. The chain is Suppressor of cytokine signaling 6 (SOCS6) from Homo sapiens (Human).